The chain runs to 774 residues: Armadillo-like helical domain-containing protein 4 (774 aa).

The N-terminal stretch at 1-27 (MRGPIVLHICLAFCSLLLFSVATQCLA) is a signal peptide. The Extracellular portion of the chain corresponds to 28–714 (FPKIERRREI…KDKAGYMSGM (687 aa)). The span at 41–52 (HAEKGQSDKMNT) shows a compositional bias: basic and acidic residues. Disordered regions lie at residues 41–63 (HAEK…VTSK) and 97–135 (QPGQ…ERIS). The N-linked (GlcNAc...) asparagine glycan is linked to Asn57. Residue Asn189 is glycosylated (N-linked (GlcNAc...) asparagine). Over residues 221-233 (KTEKFEADTDHRT) the composition is skewed to basic and acidic residues. 2 disordered regions span residues 221-275 (KTEK…QPLE) and 600-669 (ASYG…PGLE). The segment covering 258–275 (SQMTADNTQAAATKQPLE) has biased composition (polar residues). The segment covering 607–651 (LESEEGQEDEDEEDEEDEDEEEEDEEEDEEDKDADSLDEGLDGDT) has biased composition (acidic residues). Residues 715-735 (LVPVGVGIAGALFILGALYSI) form a helical membrane-spanning segment. At 736–774 (KVMNRRRRNGFKRHKRKQREFNSMQDRVMLLADSSEDEF) the chain is on the cytoplasmic side. Residues Ser769 and Ser770 each carry the phosphoserine modification.

In terms of assembly, interacts with IL6ST; this interaction prevents IL6ST protein homodimerization and bridges ARMH4 with IL6R and STAT3 and therefore inhibits phosphorylation of STAT3 at 'Tyr-705'. Interacts (via cytoplasmic tail) with RICTOR; this interaction bridges ARMH4 to the mTORC2 complex and inhibits the mTORC2 kinase activity. In terms of tissue distribution, expressed in podocytes.

It is found in the membrane. Functionally, may modulate immune response and may play a role in inflammation. Down-modulates STAT3 signaling throught direct interaction with IL6ST, resulting in the inhibition of phosphorylation of STAT3 at 'Tyr-705'. May negatively regulates AKT signaling by modulating the activity of mTORC2 complex through RICTOR interaction. The protein is Armadillo-like helical domain-containing protein 4 of Homo sapiens (Human).